The sequence spans 251 residues: Copper transport protein CTR1 (251 aa).

Residues alanine 90 to valine 110 form a helical membrane-spanning segment. Over residues aspartate 157 to lysine 173 the composition is skewed to basic and acidic residues. Residues aspartate 157 to glycine 176 are disordered. A helical transmembrane segment spans residues methionine 208–valine 228.

As to quaternary structure, oligomer.

It is found in the cell membrane. In terms of biological role, required for high affinity copper (probably reduced Cu I) transport into the cell. The chain is Copper transport protein CTR1 (CTR1) from Candida albicans (strain SC5314 / ATCC MYA-2876) (Yeast).